The following is a 518-amino-acid chain: Glutamate--cysteine ligase (518 aa).

The protein belongs to the glutamate--cysteine ligase type 1 family. Type 1 subfamily.

It carries out the reaction L-cysteine + L-glutamate + ATP = gamma-L-glutamyl-L-cysteine + ADP + phosphate + H(+). Its pathway is sulfur metabolism; glutathione biosynthesis; glutathione from L-cysteine and L-glutamate: step 1/2. The chain is Glutamate--cysteine ligase from Buchnera aphidicola subsp. Acyrthosiphon pisum (strain 5A).